The sequence spans 379 residues: Chaperone protein DnaJ (379 aa).

Residues glutamate 5 to glycine 69 enclose the J domain. Residues glycine 135–threonine 217 form a CR-type zinc finger. 8 residues coordinate Zn(2+): cysteine 148, cysteine 151, cysteine 165, cysteine 168, cysteine 191, cysteine 194, cysteine 205, and cysteine 208. CXXCXGXG motif repeat units lie at residues cysteine 148 to glycine 155, cysteine 165 to glycine 172, cysteine 191 to glycine 198, and cysteine 205 to glycine 212.

This sequence belongs to the DnaJ family. In terms of assembly, homodimer. It depends on Zn(2+) as a cofactor.

Its subcellular location is the cytoplasm. In terms of biological role, participates actively in the response to hyperosmotic and heat shock by preventing the aggregation of stress-denatured proteins and by disaggregating proteins, also in an autonomous, DnaK-independent fashion. Unfolded proteins bind initially to DnaJ; upon interaction with the DnaJ-bound protein, DnaK hydrolyzes its bound ATP, resulting in the formation of a stable complex. GrpE releases ADP from DnaK; ATP binding to DnaK triggers the release of the substrate protein, thus completing the reaction cycle. Several rounds of ATP-dependent interactions between DnaJ, DnaK and GrpE are required for fully efficient folding. Also involved, together with DnaK and GrpE, in the DNA replication of plasmids through activation of initiation proteins. The protein is Chaperone protein DnaJ of Streptococcus agalactiae serotype III (strain NEM316).